Reading from the N-terminus, the 325-residue chain is Glutarate 2-hydroxylase (325 aa).

Fe cation-binding residues include His-160, Asp-162, and His-292.

The protein belongs to the glutarate hydroxylase family. Homotetramer. It depends on Fe(2+) as a cofactor.

It carries out the reaction glutarate + 2-oxoglutarate + O2 = (S)-2-hydroxyglutarate + succinate + CO2. It functions in the pathway amino-acid degradation. Acts as an alpha-ketoglutarate-dependent dioxygenase catalyzing hydroxylation of glutarate (GA) to L-2-hydroxyglutarate (L2HG). Functions in a L-lysine degradation pathway that proceeds via cadaverine, glutarate and L-2-hydroxyglutarate. In Escherichia coli (strain K12 / MC4100 / BW2952), this protein is Glutarate 2-hydroxylase.